Here is a 291-residue protein sequence, read N- to C-terminus: tRNA dimethylallyltransferase (291 aa).

Position 11 to 18 (11 to 18 (GPTASGKS)) interacts with ATP. 13-18 (TASGKS) provides a ligand contact to substrate. An interaction with substrate tRNA region spans residues 42–45 (DSMQ).

The protein belongs to the IPP transferase family. In terms of assembly, monomer. Mg(2+) serves as cofactor.

It catalyses the reaction adenosine(37) in tRNA + dimethylallyl diphosphate = N(6)-dimethylallyladenosine(37) in tRNA + diphosphate. Functionally, catalyzes the transfer of a dimethylallyl group onto the adenine at position 37 in tRNAs that read codons beginning with uridine, leading to the formation of N6-(dimethylallyl)adenosine (i(6)A). In Rubrobacter xylanophilus (strain DSM 9941 / JCM 11954 / NBRC 16129 / PRD-1), this protein is tRNA dimethylallyltransferase.